A 331-amino-acid polypeptide reads, in one-letter code: Tryptophan--tRNA ligase (331 aa).

ATP contacts are provided by residues 10–12 and 18–19; these read QPS and GN. The short motif at 11-19 is the 'HIGH' region element; the sequence is PSGQLTLGN. Residue aspartate 133 participates in L-tryptophan binding. ATP-binding positions include 145–147, valine 184, and 193–197; these read GED and KMSKS. The short motif at 193-197 is the 'KMSKS' region element; the sequence is KMSKS.

It belongs to the class-I aminoacyl-tRNA synthetase family. In terms of assembly, homodimer.

The protein resides in the cytoplasm. It carries out the reaction tRNA(Trp) + L-tryptophan + ATP = L-tryptophyl-tRNA(Trp) + AMP + diphosphate + H(+). Its function is as follows. Catalyzes the attachment of tryptophan to tRNA(Trp). This is Tryptophan--tRNA ligase from Listeria monocytogenes serovar 1/2a (strain ATCC BAA-679 / EGD-e).